The chain runs to 646 residues: Threonine--tRNA ligase (646 aa).

Residues 1 to 63 (MAQISLTFPD…ETDAKIAIHT (63 aa)) enclose the TGS domain. Residues 247 to 544 (DHRKLGREME…LIENYAGKLP (298 aa)) are catalytic. Positions 344, 395, and 521 each coordinate Zn(2+).

It belongs to the class-II aminoacyl-tRNA synthetase family. Homodimer. The cofactor is Zn(2+).

It is found in the cytoplasm. The catalysed reaction is tRNA(Thr) + L-threonine + ATP = L-threonyl-tRNA(Thr) + AMP + diphosphate + H(+). In terms of biological role, catalyzes the attachment of threonine to tRNA(Thr) in a two-step reaction: L-threonine is first activated by ATP to form Thr-AMP and then transferred to the acceptor end of tRNA(Thr). Also edits incorrectly charged L-seryl-tRNA(Thr). The sequence is that of Threonine--tRNA ligase from Cereibacter sphaeroides (strain ATCC 17029 / ATH 2.4.9) (Rhodobacter sphaeroides).